Here is a 472-residue protein sequence, read N- to C-terminus: Nuclear receptor subfamily 0 group B member 1 (472 aa).

3 repeat units span residues 1 to 67 (MAGE…YRCC), 68 to 135 (FCGE…YRCC), and 136 to 202 (FCGE…YRSY). Positions 1–255 (MAGEDHPWQG…RLITLKDPQV (255 aa)) are 4 X 67 AA tandem repeats. Short sequence motifs (LXXLL motif) lie at residues 13 to 17 (LYNLL), 80 to 84 (LYSML), and 148 to 152 (LYSLL). An NR LBD domain is found at 190–471 (QSTQAMAFLY…DMMLEMLCAK (282 aa)). The stretch at 203-255 (VCGEEQPQQISVASGTPVSADQTPATPQEQPRAPWWDASPGVQRLITLKDPQV) is one 4; truncated repeat. Positions 214 to 231 (VASGTPVSADQTPATPQE) are enriched in polar residues. Disordered regions lie at residues 214-238 (VASG…APWW) and 324-343 (TTRR…ATEQ). Residues 463-468 (MMLEML) carry the AF-2 motif motif.

It belongs to the nuclear hormone receptor family. NR0 subfamily. In terms of assembly, homodimer. Interacts with NR5A1, NR5A2, NR0B2 and with COPS2. Interacts with ESRRB; represses ESRRB activity at the GATA6 promoter. In terms of tissue distribution, expressed in adult cerebral cortex, spinal cord, thymus, heart, lung, ovary, testis, adrenal gland, hypothalamus, spleen and kidney.

The protein resides in the nucleus. Its subcellular location is the cytoplasm. In terms of biological role, nuclear receptor that lacks a DNA-binding domain and acts as a corepressor that inhibits the transcriptional activity of other nuclear receptors through heterodimeric interactions. Component of a cascade required for the development of the hypothalamic-pituitary-adrenal-gonadal axis. May also have a role in the development of the embryo and in the maintenance of embryonic stem cell pluripotency. This chain is Nuclear receptor subfamily 0 group B member 1 (Nr0b1), found in Mus musculus (Mouse).